Here is a 140-residue protein sequence, read N- to C-terminus: Large ribosomal subunit protein uL11 (140 aa).

It belongs to the universal ribosomal protein uL11 family. Part of the ribosomal stalk of the 50S ribosomal subunit. Interacts with L10 and the large rRNA to form the base of the stalk. L10 forms an elongated spine to which L12 dimers bind in a sequential fashion forming a multimeric L10(L12)X complex. Post-translationally, one or more lysine residues are methylated.

Functionally, forms part of the ribosomal stalk which helps the ribosome interact with GTP-bound translation factors. In Dehalococcoides mccartyi (strain ATCC BAA-2266 / KCTC 15142 / 195) (Dehalococcoides ethenogenes (strain 195)), this protein is Large ribosomal subunit protein uL11.